We begin with the raw amino-acid sequence, 287 residues long: Phosphatidylglycerol--prolipoprotein diacylglyceryl transferase (287 aa).

4 helical membrane passes run 26 to 46 (VAIR…WWLA), 71 to 91 (FLVW…ILFY), 106 to 126 (IWRG…AMIV), and 132 to 152 (GLPV…GLFF). A 1,2-diacyl-sn-glycero-3-phospho-(1'-sn-glycerol) is bound at residue arginine 154. A run of 3 helical transmembrane segments spans residues 187 to 207 (SQLY…QVLA), 217 to 237 (GVIS…VEFF), and 251 to 271 (WLTM…WAIW).

Belongs to the Lgt family.

It localises to the cell inner membrane. It carries out the reaction L-cysteinyl-[prolipoprotein] + a 1,2-diacyl-sn-glycero-3-phospho-(1'-sn-glycerol) = an S-1,2-diacyl-sn-glyceryl-L-cysteinyl-[prolipoprotein] + sn-glycerol 1-phosphate + H(+). It participates in protein modification; lipoprotein biosynthesis (diacylglyceryl transfer). Catalyzes the transfer of the diacylglyceryl group from phosphatidylglycerol to the sulfhydryl group of the N-terminal cysteine of a prolipoprotein, the first step in the formation of mature lipoproteins. This is Phosphatidylglycerol--prolipoprotein diacylglyceryl transferase from Allorhizobium ampelinum (strain ATCC BAA-846 / DSM 112012 / S4) (Agrobacterium vitis (strain S4)).